A 115-amino-acid polypeptide reads, in one-letter code: Probable non-functional immunoglobulin heavy variable 8-51-1 (115 aa).

An N-terminal signal peptide occupies residues 1-17; sequence MLVCVLLYSFRLFGIQG. Residues 18 to 42 are framework-1; it reads EAQLTESGGDLVHLEGPLRLSCAAS. In terms of domain architecture, Ig-like spans 19–115; it reads AQLTESGGDL…QNMAAFNCAG (97 aa). A complementarity-determining-1 region spans residues 43–50; the sequence is WFTFSIYE. The segment at 51–67 is framework-2; the sequence is IHWVCQASGKGLEWVAV. Cysteines 55 and 113 form a disulfide. Positions 68-75 are complementarity-determining-2; sequence IWRGESHQ. Residues 76–113 form a framework-3 region; the sequence is YNADYVRGRLTTSRDNTKYMLYMQMISLRTQNMAAFNC. Residues 114–115 are complementarity-determining-3; it reads AG.

Immunoglobulins are composed of two identical heavy chains and two identical light chains; disulfide-linked.

The protein resides in the secreted. Its subcellular location is the cell membrane. Probable non-functional open reading frame (ORF) of V region of the variable domain of immunoglobulin heavy chains. Non-functional ORF generally cannot participate in the synthesis of a productive immunoglobulin chain due to altered V-(D)-J or switch recombination and/or splicing site (at mRNA level) and/or conserved amino acid change (protein level). Immunoglobulins, also known as antibodies, are membrane-bound or secreted glycoproteins produced by B lymphocytes. In the recognition phase of humoral immunity, the membrane-bound immunoglobulins serve as receptors which, upon binding of a specific antigen, trigger the clonal expansion and differentiation of B lymphocytes into immunoglobulins-secreting plasma cells. Secreted immunoglobulins mediate the effector phase of humoral immunity, which results in the elimination of bound antigens. The antigen binding site is formed by the variable domain of one heavy chain, together with that of its associated light chain. Thus, each immunoglobulin has two antigen binding sites with remarkable affinity for a particular antigen. The variable domains are assembled by a process called V-(D)-J rearrangement and can then be subjected to somatic hypermutations which, after exposure to antigen and selection, allow affinity maturation for a particular antigen. In Homo sapiens (Human), this protein is Probable non-functional immunoglobulin heavy variable 8-51-1.